The sequence spans 724 residues: Probable metal-nicotianamine transporter YSL8 (724 aa).

The tract at residues 1–58 is disordered; that stretch reads MRKGGLTPDRDRQIEEHELQETGISPDIERLKRNINATPYQREEEEEDREEQEESVEG. Basic and acidic residues predominate over residues 8–20; it reads PDRDRQIEEHELQ. Ser-25 is subject to Phosphoserine. Over residues 43–56 the composition is skewed to acidic residues; it reads EEEEEDREEQEESV. Helical transmembrane passes span 72 to 92, 96 to 116, 144 to 164, 184 to 204, 245 to 265, 304 to 324, and 349 to 369; these read LTIR…FIVM, LTTG…FFFV, CVVA…LFAM, LGWM…SVVP, VLGK…FFTA, IINI…WPLI, and VFIA…KVLI. The interval 386 to 407 is disordered; that stretch reads RSSLAHKEDPPASPASPLTPRI. The next 8 membrane-spanning stretches (helical) occupy residues 423–443, 455–475, 478–497, 501–520, 541–561, 603–623, 641–661, and 679–699; these read IPSW…TAIL, IIVI…GAGL, WSLA…AWAG, GGLL…VSTA, FVSQ…VFWL, LMLC…KDCL, FFLG…LFVW, and GLIC…IAGV.

The protein belongs to the YSL (TC 2.A.67.2) family.

It is found in the membrane. Its function is as follows. May be involved in the transport of nicotianamine-chelated metals. The sequence is that of Probable metal-nicotianamine transporter YSL8 (YSL8) from Arabidopsis thaliana (Mouse-ear cress).